The sequence spans 365 residues: N5-carboxyaminoimidazole ribonucleotide synthase (365 aa).

Residues Arg93, Lys132, 137-143, 168-171, Glu176, His199, and 249-250 contribute to the ATP site; these read GYDGKGQ, EEFV, and NE. In terms of domain architecture, ATP-grasp spans 97-279; it reads KLFLKKHGFP…QFENLLRAIT (183 aa).

This sequence belongs to the PurK/PurT family. In terms of assembly, homodimer.

The enzyme catalyses 5-amino-1-(5-phospho-beta-D-ribosyl)imidazole + hydrogencarbonate + ATP = 5-carboxyamino-1-(5-phospho-D-ribosyl)imidazole + ADP + phosphate + 2 H(+). It participates in purine metabolism; IMP biosynthesis via de novo pathway; 5-amino-1-(5-phospho-D-ribosyl)imidazole-4-carboxylate from 5-amino-1-(5-phospho-D-ribosyl)imidazole (N5-CAIR route): step 1/2. Functionally, catalyzes the ATP-dependent conversion of 5-aminoimidazole ribonucleotide (AIR) and HCO(3)(-) to N5-carboxyaminoimidazole ribonucleotide (N5-CAIR). This chain is N5-carboxyaminoimidazole ribonucleotide synthase, found in Aquifex aeolicus (strain VF5).